Consider the following 92-residue polypeptide: Long neurotoxin 77 (92 aa).

An N-terminal signal peptide occupies residues 1 to 21 (MKTLLLTLVVVTIVCLDLGDS). Cystine bridges form between Cys24-Cys41, Cys34-Cys62, Cys47-Cys51, Cys66-Cys77, and Cys78-Cys83.

Belongs to the three-finger toxin family. Long-chain subfamily. Type II alpha-neurotoxin sub-subfamily. As to expression, expressed by the venom gland.

It is found in the secreted. In terms of biological role, binds with high affinity to muscular (alpha-1/CHRNA1) and neuronal (alpha-7/CHRNA7) nicotinic acetylcholine receptor (nAChR) and inhibits acetylcholine from binding to the receptor, thereby impairing neuromuscular and neuronal transmission. The sequence is that of Long neurotoxin 77 from Drysdalia coronoides (White-lipped snake).